Reading from the N-terminus, the 133-residue chain is Nucleoid-associated protein Mb3743c (133 aa).

Positions 98–133 are disordered; that stretch reads GAMRPPAPPAAPPGAPGMPGMPGMPGAPGAPPVPGI. Positions 102–113 are enriched in pro residues; that stretch reads PPAPPAAPPGAP.

It belongs to the YbaB/EbfC family. Homodimer.

It is found in the cytoplasm. It localises to the nucleoid. Its function is as follows. Binds to DNA and alters its conformation. May be involved in regulation of gene expression, nucleoid organization and DNA protection. This is Nucleoid-associated protein Mb3743c from Mycobacterium bovis (strain ATCC BAA-935 / AF2122/97).